Consider the following 225-residue polypeptide: PKHD-type hydroxylase Smlt1146 (225 aa).

The 100-residue stretch at 78–177 folds into the Fe2OG dioxygenase domain; that stretch reads KYLPPRFNRY…RVASFFWVQS (100 aa). Residues histidine 96, aspartate 98, and histidine 158 each contribute to the Fe cation site. Arginine 168 is a binding site for 2-oxoglutarate.

It depends on Fe(2+) as a cofactor. Requires L-ascorbate as cofactor.

This is PKHD-type hydroxylase Smlt1146 from Stenotrophomonas maltophilia (strain K279a).